The sequence spans 140 residues: Putative pre-16S rRNA nuclease (140 aa).

The protein belongs to the YqgF nuclease family.

The protein resides in the cytoplasm. In terms of biological role, could be a nuclease involved in processing of the 5'-end of pre-16S rRNA. This is Putative pre-16S rRNA nuclease from Parabacteroides distasonis (strain ATCC 8503 / DSM 20701 / CIP 104284 / JCM 5825 / NCTC 11152).